The following is a 234-amino-acid chain: Cysteine proteinase inhibitor 6 (234 aa).

The N-terminal stretch at 1–24 (MMRSRFLLFIVFFSLSLFISSLIA) is a signal peptide. Met2 is modified (N-acetylalanine). Cystatin domains are found at residues 38 to 126 (GGVG…KPAS) and 145 to 215 (SGWR…FKVE). The Secondary area of contact signature appears at 82-86 (QVVAG). The interval 133-154 (SSDLGCKQGEHESGWREVPGDD) is disordered. Basic and acidic residues predominate over residues 140–154 (QGEHESGWREVPGDD). At Ser174 the chain carries Phosphoserine.

Belongs to the cystatin family. Phytocystatin subfamily.

The protein localises to the secreted. In terms of biological role, specific inhibitor of cysteine proteinases. Probably involved in the regulation of endogenous processes and in defense against pests and pathogens. The protein is Cysteine proteinase inhibitor 6 (CYS6) of Arabidopsis thaliana (Mouse-ear cress).